A 482-amino-acid polypeptide reads, in one-letter code: Glutamate--tRNA ligase (482 aa).

The short motif at 9–19 (PSPTGPLHIGG) is the 'HIGH' region element. Residues 250–254 (KMSKR) carry the 'KMSKS' region motif. Lys253 is a binding site for ATP.

Belongs to the class-I aminoacyl-tRNA synthetase family. Glutamate--tRNA ligase type 1 subfamily. As to quaternary structure, monomer.

The protein localises to the cytoplasm. The catalysed reaction is tRNA(Glu) + L-glutamate + ATP = L-glutamyl-tRNA(Glu) + AMP + diphosphate. Its function is as follows. Catalyzes the attachment of glutamate to tRNA(Glu) in a two-step reaction: glutamate is first activated by ATP to form Glu-AMP and then transferred to the acceptor end of tRNA(Glu). The chain is Glutamate--tRNA ligase from Desulforamulus reducens (strain ATCC BAA-1160 / DSM 100696 / MI-1) (Desulfotomaculum reducens).